Here is a 60-residue protein sequence, read N- to C-terminus: Large ribosomal subunit protein uL30 (60 aa).

Belongs to the universal ribosomal protein uL30 family. Part of the 50S ribosomal subunit.

The protein is Large ribosomal subunit protein uL30 of Staphylococcus epidermidis (strain ATCC 35984 / DSM 28319 / BCRC 17069 / CCUG 31568 / BM 3577 / RP62A).